Consider the following 429-residue polypeptide: Enolase (429 aa).

Gln-162 is a (2R)-2-phosphoglycerate binding site. Glu-204 acts as the Proton donor in catalysis. 3 residues coordinate Mg(2+): Asp-241, Glu-286, and Asp-313. (2R)-2-phosphoglycerate-binding residues include Lys-338, Arg-367, Ser-368, and Lys-389. Lys-338 acts as the Proton acceptor in catalysis.

This sequence belongs to the enolase family. It depends on Mg(2+) as a cofactor.

Its subcellular location is the cytoplasm. It localises to the secreted. The protein localises to the cell surface. It carries out the reaction (2R)-2-phosphoglycerate = phosphoenolpyruvate + H2O. The protein operates within carbohydrate degradation; glycolysis; pyruvate from D-glyceraldehyde 3-phosphate: step 4/5. Its function is as follows. Catalyzes the reversible conversion of 2-phosphoglycerate (2-PG) into phosphoenolpyruvate (PEP). It is essential for the degradation of carbohydrates via glycolysis. The chain is Enolase from Halalkalibacterium halodurans (strain ATCC BAA-125 / DSM 18197 / FERM 7344 / JCM 9153 / C-125) (Bacillus halodurans).